A 135-amino-acid chain; its full sequence is Salivary protein 15 Iper-1 (135 aa).

The first 22 residues, Met-1–Ala-22, serve as a signal peptide directing secretion. 2 N-linked (GlcNAc...) asparagine glycosylation sites follow: Asn-93 and Asn-104. A CD4-binding region spans residues Gly-116–Cys-135.

This sequence belongs to the salp15 family. Interacts with host CD4. Interacts with host DC-SIGN (CD209). In terms of assembly, (Microbial infection) Interacts with Borrelia outer surface protein C (OspC). In terms of tissue distribution, expressed in salivary glands from feeding female ticks. Highly expressed 4 days after start of feeding.

It localises to the secreted. Its function is as follows. Salivary tick protein that downregulates host immune system by binding to both dendritic cells, and CD4(+) T cells. Specifically binds to the CD4 coreceptor on T cells. This interaction prevents the activation of the Src kinase, Lck, and its downstream substrate Zap-70, and results in deficient activation of PLCgamma1, the repression of calcium fluxes triggered by T-cell antigen receptor (TCR) ligation, and a subsequent reduction in interleukin-2 production. This salivary protein also binds to DC-SIGN (CD209) on dendritic cells (DC) and activates the Raf-1 kinase/MEK signaling pathway that results in down-regulating expression of pro-inflammatory cytokines. Furthermore, it inhibits T cell proliferation induced by DCs. It also inhibits in vitro keratinocyte inflammation induced by Borrelia burgdorferi or by the major outer surface protein (OspC) of Borrelia. In addition, it downregulates chemokines and monocyte chemoattractant protein 1, as well as several antimicrobial peptides such as defensins, cathelicidin, psoriasin, and RNase 7. Apart from its immunomodulatory activities, it is also associated with protection of Borrelia spirochetes from antibody-mediated killing through its binding to OspC. In vivo, tests on different immune disease animal models show promising therapeutic results, e.g., in inhibiting HIV infection, experimental autoimmune encephalomyelitis, transplantation rejection, and asthma. (Microbial infection) Protects Borrelia garinii from anti-Borrelia antibody-mediated cytotoxicity in vitro. May facilitate B.garinii transmission in mouse model. Functionally, (Microbial infection) Protects Borrelia burgdorferi from anti-Borrelia antibody-mediated cytotoxicity in vitro. In terms of biological role, (Microbial infection) Protects Borrelia afzelii from anti-Borrelia antibody-mediated cytotoxicity in vitro. The sequence is that of Salivary protein 15 Iper-1 from Ixodes persulcatus (Taiga tick).